The primary structure comprises 222 residues: MLEGYYIVENTGVVPAERRFKFKDLKAWGYDLHLGTIDGREAYFVSKAGTREEGETYTEGGKEYHISETQKEIPKNARLLARIVIEKGQPYLEFWLDTEDGNFPLAKEDPRLILHRFWTEKKFNQLEKHVGSVGLTTDFFKDRVFVKSIPLPYEEYPPKVRRVLREVRDVHRDLTGFGRFVFQYFGEEDKTHQYRLWWLLPTIHLFDVEVSNEVDKILAMLD.

It belongs to the UPF0128 family.

This is UPF0128 protein TK2294 from Thermococcus kodakarensis (strain ATCC BAA-918 / JCM 12380 / KOD1) (Pyrococcus kodakaraensis (strain KOD1)).